A 195-amino-acid polypeptide reads, in one-letter code: dITP/XTP pyrophosphatase (195 aa).

Substrate is bound at residue 8–13; it reads TNNQGK. Residues Glu39 and Asp68 each coordinate Mg(2+). Asp68 acts as the Proton acceptor in catalysis. Residues Ser69, 149 to 152, Lys172, and 177 to 178 each bind substrate; these read FGYD and HR.

The protein belongs to the HAM1 NTPase family. As to quaternary structure, homodimer. Requires Mg(2+) as cofactor.

It carries out the reaction XTP + H2O = XMP + diphosphate + H(+). The enzyme catalyses dITP + H2O = dIMP + diphosphate + H(+). The catalysed reaction is ITP + H2O = IMP + diphosphate + H(+). Pyrophosphatase that catalyzes the hydrolysis of nucleoside triphosphates to their monophosphate derivatives, with a high preference for the non-canonical purine nucleotides XTP (xanthosine triphosphate), dITP (deoxyinosine triphosphate) and ITP. Seems to function as a house-cleaning enzyme that removes non-canonical purine nucleotides from the nucleotide pool, thus preventing their incorporation into DNA/RNA and avoiding chromosomal lesions. The polypeptide is dITP/XTP pyrophosphatase (Staphylococcus epidermidis (strain ATCC 35984 / DSM 28319 / BCRC 17069 / CCUG 31568 / BM 3577 / RP62A)).